Here is a 344-residue protein sequence, read N- to C-terminus: Anthranilate phosphoribosyltransferase (344 aa).

5-phospho-alpha-D-ribose 1-diphosphate-binding positions include Gly84, 87–88 (GD), Thr92, 94–97 (NIST), 112–120 (KHGGRSVSS), and Ser124. Gly84 contacts anthranilate. Residue Ser96 participates in Mg(2+) binding. Arg170 is an anthranilate binding site. 2 residues coordinate Mg(2+): Asp229 and Glu230.

It belongs to the anthranilate phosphoribosyltransferase family. As to quaternary structure, homodimer. It depends on Mg(2+) as a cofactor.

The enzyme catalyses N-(5-phospho-beta-D-ribosyl)anthranilate + diphosphate = 5-phospho-alpha-D-ribose 1-diphosphate + anthranilate. Its pathway is amino-acid biosynthesis; L-tryptophan biosynthesis; L-tryptophan from chorismate: step 2/5. In terms of biological role, catalyzes the transfer of the phosphoribosyl group of 5-phosphorylribose-1-pyrophosphate (PRPP) to anthranilate to yield N-(5'-phosphoribosyl)-anthranilate (PRA). This is Anthranilate phosphoribosyltransferase from Janthinobacterium sp. (strain Marseille) (Minibacterium massiliensis).